The chain runs to 1040 residues: MQVLPPGSTGGPSRLFILRPVATTLLMAAILLAGIIGYRFLPVAALPEVDYPTIQVVTLYPGASPDVMTSAVTAPLERQFGQMSGLKQMSSQSSGGASVVTLQFQLTLPLDVAEQEVQAAINAATNLLPSDLPNPPIYSKVNPADPPIMTLAVTSNAMPMTQVEDMVETRVAQKISQVSGVGLVTLAGGQRPAVRVKLNAQAVAALGLTSETIRTAITGANVNSAKGSLDGPERAVTLSANDQMQSADEYRKLIIAYQNGAPVRLGDVATVEQGAENSWLGAWANQAPAIVMNVQRQPGANIIATADSIRQMLPQLTESLPKSVKVTVLSDRTTNIRASVRDTQFELMLAIALVVMIIYLFLRNIPATIIPGVAVPLSLIGTFAVMVFLDFSINNLTLMALTIATGFVVDDAIVVIENISRYIEKGEKPLAAALKGAGEIGFTIISLTFSLIAVLIPLLFMGDIVGRLFREFAVTLAVAILISAVVSLTLTPMMCARMLSQQSLRKQNRFSRACERMFDRVIASYGRGLAKVLNHPWLTLSVAFATLLLSIMLWIVIPKGFFPVQDNGIIQGTLQAPQSSSYASMAQRQRQVAERILQDPAVQSLTTFVGVDGANPTLNSARLQINLKPLDARDDRVQQVISRLQTAVATIPGVALYLQPTQDLTIDTQVSRTQYQFTLQATTLDALSHWVPKLQNALQSLPQLSEVSSDWQDRGLAAWVNVDRDSASRLGISMADVDNALYNAFGQRLISTIYTQANQYRVVLEHNTASTPGLAALETIRLTSRDGGTVPLSAIARIEQRFAPLSINHLDQFPVTTFSFNVPEGYSLGDAVQAILDTEKTLALPADITTQFQGSTLAFQAALGSTVWLIVAAVVAMYIVLGVLYESFIHPITILSTLPTAGVGALLALIIAGSELDIIAIIGIILLIGIVKKNAIMMIDFALAAEREQGMSPRDAIFQACLLRFRPILMTTLAALLGALPLMLSTGVGAELRRPLGIAMVGGLLVSQVLTLFTTPVIYLLFDRLSLYVKSRFPRHKEEA.

The next 12 membrane-spanning stretches (helical) occupy residues 25 to 45 (LLMAAILLAGIIGYRFLPVAA), 347 to 367 (LMLAIALVVMIIYLFLRNIPA), 369 to 389 (IIPGVAVPLSLIGTFAVMVFL), 396 to 416 (LTLMALTIATGFVVDDAIVVI), 440 to 460 (IGFTIISLTFSLIAVLIPLLF), 472 to 492 (FAVTLAVAILISAVVSLTLTP), 537 to 557 (WLTLSVAFATLLLSIMLWIVI), 863 to 883 (LGSTVWLIVAAVVAMYIVLGV), 888 to 908 (FIHPITILSTLPTAGVGALLA), 910 to 930 (IIAGSELDIIAIIGIILLIGI), 968 to 988 (ILMTTLAALLGALPLMLSTGV), and 998 to 1018 (IAMVGGLLVSQVLTLFTTPVI).

It belongs to the resistance-nodulation-cell division (RND) (TC 2.A.6) family. MdtB subfamily. As to quaternary structure, part of a tripartite efflux system composed of MdtA, MdtB and MdtC. MdtB forms a heteromultimer with MdtC.

The protein resides in the cell inner membrane. The protein is Multidrug resistance protein MdtB of Salmonella newport (strain SL254).